Reading from the N-terminus, the 545-residue chain is MAAKEVVFGNDARVKMLAGVNILANAVKVTLGPKGRNVVLDKSFGSPLITKDGVSVAKEIELEDKFENMGAQMVKEVASKANDAAGDGTTTATVLAQAIVTEGLKAVAAGMNPMDLKRGIDKAVAAAVIELKNLSQDCADSKAIAQVGTISANSDESIGEIIATAMEKVGKEGVITVEEGQALENELDVVEGMQFDRGYLSPYFINKPETGSVELDHPFVLLVDKKISNIRELLPILEGLAKTGKPLLIVAEDVEGEALATLVVNNMRGIVKVAAVKAPGFGDRRKAMLQDVAILTGGTVIAEEIGLELEKATLEDLGTAKRVVITKDNTTIIDGNGEQAQIEARVSQIKQQIEESTSDYDKEKLQERMAKLAGGVAVIKVGAATEVEMKEKKARVEDALHATRAAVEEGVVPGGGVALVRVASKIADVEVANEDQKHGVVIALRAMEAPLRQIATNAGEEASVVANTVKNGSGNYGYNAGNDTYGDMLEMGILDPTKVTRSALQFAASIAGLMITTEAMVAELPKADAPDMGGMGGMGGMGGMM.

Residues 30–33 (TLGP), Lys51, 87–91 (DGTTT), Gly415, and Asp495 contribute to the ATP site.

Belongs to the chaperonin (HSP60) family. As to quaternary structure, forms a cylinder of 14 subunits composed of two heptameric rings stacked back-to-back. Interacts with the co-chaperonin GroES.

The protein resides in the cytoplasm. It catalyses the reaction ATP + H2O + a folded polypeptide = ADP + phosphate + an unfolded polypeptide.. In terms of biological role, together with its co-chaperonin GroES, plays an essential role in assisting protein folding. The GroEL-GroES system forms a nano-cage that allows encapsulation of the non-native substrate proteins and provides a physical environment optimized to promote and accelerate protein folding. The polypeptide is Chaperonin GroEL (Shewanella sp. (strain MR-7)).